A 319-amino-acid polypeptide reads, in one-letter code: MRQDKPGVLLVNLGTPDAPTTSAVKRYLKQFLSDKRVVDAPRWLWWPLLNFGILPIRSPRVSKLYASVWMDEGSPLMVYSQRQRNALAARLDMPVALGMSYGNPSLKSAIDSLMAEGVTRLIVLPLYPQFSCSTVAAVWDGITQVFAGYRSLPSVHFIRDYAQHPAYIAALKASVERSFAQHGKPDLLVTSFHGIPQRFADEGDDYPQRCYETFEALKASLGLGDDEAMLTFQSRFGREPWLMPYTDKTMESLPGKGVKHVQIMSPGFASDCLETLEEIDGENREIFLHAGGTRFEYIPALNDDEAHITMMLELVNQYR.

Residues His-193 and Glu-274 each coordinate Fe cation.

It belongs to the ferrochelatase family.

Its subcellular location is the cytoplasm. The catalysed reaction is heme b + 2 H(+) = protoporphyrin IX + Fe(2+). The protein operates within porphyrin-containing compound metabolism; protoheme biosynthesis; protoheme from protoporphyrin-IX: step 1/1. Its function is as follows. Catalyzes the ferrous insertion into protoporphyrin IX. This chain is Ferrochelatase, found in Erwinia tasmaniensis (strain DSM 17950 / CFBP 7177 / CIP 109463 / NCPPB 4357 / Et1/99).